The chain runs to 175 residues: Interleukin-10 (175 aa).

A signal peptide spans Met-1 to Cys-21. Intrachain disulfides connect Cys-26/Cys-123 and Cys-77/Cys-129.

This sequence belongs to the IL-10 family. Homodimer. Interacts with IL10RA and IL10RB. Expressed predominantly in bursa of Fabricius and cecal tonsils with low levels in thymus, liver and lung.

It is found in the secreted. Major immune regulatory cytokine that acts on many cells of the immune system where it has profound anti-inflammatory functions, limiting excessive tissue disruption caused by inflammation. Mechanistically, IL10 binds to its heterotetrameric receptor comprising IL10RA and IL10RB leading to JAK1 and STAT2-mediated phosphorylation of STAT3. In turn, STAT3 translocates to the nucleus where it drives expression of anti-inflammatory mediators. Targets antigen-presenting cells (APCs) such as macrophages and monocytes and inhibits their release of pro-inflammatory cytokines including granulocyte-macrophage colony-stimulating factor /GM-CSF, granulocyte colony-stimulating factor/G-CSF, IL-1 alpha, IL-1 beta, IL-6, IL-8 and TNF-alpha. Also interferes with antigen presentation by reducing the expression of MHC-class II and co-stimulatory molecules, thereby inhibiting their ability to induce T cell activation. In addition, controls the inflammatory response of macrophages by reprogramming essential metabolic pathways including mTOR signaling. In Gallus gallus (Chicken), this protein is Interleukin-10.